A 200-amino-acid polypeptide reads, in one-letter code: Pre-mRNA cleavage factor Im 25 kDa subunit 2 (200 aa).

The Nudix hydrolase domain maps to 45 to 172 (GMRTSVEGIL…KLLAVPLFEL (128 aa)). The tract at residues 72–74 (TFC) is interaction with RNA. The Nudix box signature appears at 79–100 (GRLKPGENEADGLKRKLTSKLG).

The protein belongs to the Nudix hydrolase family. CPSF5 subfamily. In terms of assembly, homodimer. Component of the cleavage factor Im (CFIm) complex. Forms a complex with cleavage and polyadenylation specificity factor (CPSF) subunits FIPS5, PAPS4 and CPSF30.

The protein resides in the nucleus. Its function is as follows. Component of the cleavage factor Im (CFIm) complex that plays a key role in pre-mRNA 3'-processing. Involved in association with CPSF6 or CPSF7 in pre-MRNA 3'-end poly(A) site cleavage and poly(A) addition. NUDT21/CPSF5 binds to cleavage and polyadenylation RNA substrates. The homodimer mediates simultaneous sequence-specific recognition of two 5'-UGUA-3' elements within the pre-mRNA. Binds to, but does not hydrolyze mono- and di-adenosine nucleotides. May have a role in mRNA export. The polypeptide is Pre-mRNA cleavage factor Im 25 kDa subunit 2 (Arabidopsis thaliana (Mouse-ear cress)).